The primary structure comprises 129 residues: Translation initiation factor 5A (129 aa).

Hypusine is present on Lys36.

This sequence belongs to the eIF-5A family.

It localises to the cytoplasm. Functions by promoting the formation of the first peptide bond. The polypeptide is Translation initiation factor 5A (eIF5A) (Methanobrevibacter smithii (strain ATCC 35061 / DSM 861 / OCM 144 / PS)).